Consider the following 415-residue polypeptide: Histidine--tRNA ligase (415 aa).

This sequence belongs to the class-II aminoacyl-tRNA synthetase family. In terms of assembly, homodimer.

It localises to the cytoplasm. The enzyme catalyses tRNA(His) + L-histidine + ATP = L-histidyl-tRNA(His) + AMP + diphosphate + H(+). The chain is Histidine--tRNA ligase from Rickettsia felis (strain ATCC VR-1525 / URRWXCal2) (Rickettsia azadi).